A 294-amino-acid polypeptide reads, in one-letter code: Lipoyl synthase (294 aa).

[4Fe-4S] cluster contacts are provided by C35, C40, C46, C61, C65, C68, and S275. The Radical SAM core domain maps to C46–R264.

This sequence belongs to the radical SAM superfamily. Lipoyl synthase family. Requires [4Fe-4S] cluster as cofactor.

The protein resides in the cytoplasm. It carries out the reaction [[Fe-S] cluster scaffold protein carrying a second [4Fe-4S](2+) cluster] + N(6)-octanoyl-L-lysyl-[protein] + 2 oxidized [2Fe-2S]-[ferredoxin] + 2 S-adenosyl-L-methionine + 4 H(+) = [[Fe-S] cluster scaffold protein] + N(6)-[(R)-dihydrolipoyl]-L-lysyl-[protein] + 4 Fe(3+) + 2 hydrogen sulfide + 2 5'-deoxyadenosine + 2 L-methionine + 2 reduced [2Fe-2S]-[ferredoxin]. Its pathway is protein modification; protein lipoylation via endogenous pathway; protein N(6)-(lipoyl)lysine from octanoyl-[acyl-carrier-protein]: step 2/2. Functionally, catalyzes the radical-mediated insertion of two sulfur atoms into the C-6 and C-8 positions of the octanoyl moiety bound to the lipoyl domains of lipoate-dependent enzymes, thereby converting the octanoylated domains into lipoylated derivatives. This is Lipoyl synthase from Anaeromyxobacter sp. (strain Fw109-5).